The sequence spans 402 residues: Multidrug resistance protein MdtH (402 aa).

11 helical membrane passes run 13 to 33 (YFLL…FPLI), 34 to 54 (SIRF…ALGL), 99 to 116 (PWVL…GTLF), 139 to 159 (LLMM…SWLL), 165 to 185 (LVCS…AWYL), 214 to 234 (VLTL…LPIM), 243 to 263 (AAVK…LYPI), 277 to 297 (LMAG…TSSL), 300 to 320 (LFTL…ARET), 340 to 360 (LGLA…FDAG), and 368 to 388 (LPWL…WWQF).

Belongs to the major facilitator superfamily. DHA1 family. MdtH (TC 2.A.1.2.21) subfamily.

The protein localises to the cell inner membrane. This is Multidrug resistance protein MdtH from Klebsiella pneumoniae (strain 342).